Here is a 210-residue protein sequence, read N- to C-terminus: Large ribosomal subunit protein uL3 (210 aa).

A disordered region spans residues 125–151; the sequence is RHGQSRGPMSHGSRYHRRPGSMGPVAP.

It belongs to the universal ribosomal protein uL3 family. In terms of assembly, part of the 50S ribosomal subunit. Forms a cluster with proteins L14 and L19.

One of the primary rRNA binding proteins, it binds directly near the 3'-end of the 23S rRNA, where it nucleates assembly of the 50S subunit. The protein is Large ribosomal subunit protein uL3 of Bacillus cereus (strain Q1).